We begin with the raw amino-acid sequence, 197 residues long: Superoxide dismutase [Fe] (197 aa).

Residues H26, H75, D157, and H161 each coordinate Fe cation.

The protein belongs to the iron/manganese superoxide dismutase family. Homotetramer. It depends on Fe cation as a cofactor.

It catalyses the reaction 2 superoxide + 2 H(+) = H2O2 + O2. Destroys superoxide anion radicals which are normally produced within the cells and which are toxic to biological systems. The chain is Superoxide dismutase [Fe] from Cupriavidus metallidurans (strain ATCC 43123 / DSM 2839 / NBRC 102507 / CH34) (Ralstonia metallidurans).